The chain runs to 555 residues: MVKRGKKTKYLFVTGGVVSSLGKGLSAASIGALLENRGLEVQHLKLDPYINVDPGTMSPFQHGEVFVTDDGAETDLDLGHYERFTSAKMTRRNNYTTGRIYQNVIQRERRGEYLGKTVQVIPHITDEIKAVIREAAGGADILIVEVGGTVGDIESLPFLEAIRQMKYDVGEENAVYAHLTLVPFIAAAGELKTKPTQHSVKELREIGIQPDLLLCRSDRELPRDMKDKIALFCNVDPSAVFTALDVPSIYEVPLSLHREGLDDKLAELFNIWSRAPRLERWETIVDKVKNPRRGEVRIGIVGKYVELHESYKSLNEALVHGGIANDARVKLAFIDSTKLEEGDLSDLDKVDAILVPGGFGIRGTEGKILGVKYAREHKVPFFGICLGLQMAVIEMARNVLGLAGANSLEFDEATPHPVVTLMEGQKGVTDKGGTMRLGAYPCTLKEGTKARALYGAELVHERHRHRFEFNNDYRAQFEAAGMVFSGVNPDLGLVEMIELPGQHFVGCQFHPEFRSKPFAPHPLFAGFVKAALEHRDAQQRQPPAEVKKLAVGKNG.

The interval 1–271 (MVKRGKKTKY…DDKLAELFNI (271 aa)) is amidoligase domain. Ser19 serves as a coordination point for CTP. Ser19 lines the UTP pocket. Residues 20 to 25 (SLGKGL) and Asp77 contribute to the ATP site. Positions 77 and 145 each coordinate Mg(2+). CTP-binding positions include 152 to 154 (DIE), 192 to 197 (KTKPTQ), and Lys228. UTP contacts are provided by residues 192-197 (KTKPTQ) and Lys228. The region spanning 297–537 (RIGIVGKYVE…VKAALEHRDA (241 aa)) is the Glutamine amidotransferase type-1 domain. An L-glutamine-binding site is contributed by Gly358. The active-site Nucleophile; for glutamine hydrolysis is Cys385. L-glutamine-binding positions include 386–389 (LGLQ), Glu409, and Arg466. Active-site residues include His510 and Glu512. A disordered region spans residues 535 to 555 (RDAQQRQPPAEVKKLAVGKNG).

Belongs to the CTP synthase family. In terms of assembly, homotetramer.

The enzyme catalyses UTP + L-glutamine + ATP + H2O = CTP + L-glutamate + ADP + phosphate + 2 H(+). It carries out the reaction L-glutamine + H2O = L-glutamate + NH4(+). It catalyses the reaction UTP + NH4(+) + ATP = CTP + ADP + phosphate + 2 H(+). It functions in the pathway pyrimidine metabolism; CTP biosynthesis via de novo pathway; CTP from UDP: step 2/2. With respect to regulation, allosterically activated by GTP, when glutamine is the substrate; GTP has no effect on the reaction when ammonia is the substrate. The allosteric effector GTP functions by stabilizing the protein conformation that binds the tetrahedral intermediate(s) formed during glutamine hydrolysis. Inhibited by the product CTP, via allosteric rather than competitive inhibition. Functionally, catalyzes the ATP-dependent amination of UTP to CTP with either L-glutamine or ammonia as the source of nitrogen. Regulates intracellular CTP levels through interactions with the four ribonucleotide triphosphates. The chain is CTP synthase from Anaeromyxobacter sp. (strain K).